Here is a 370-residue protein sequence, read N- to C-terminus: UDP-N-acetylglucosamine--N-acetylmuramyl-(pentapeptide) pyrophosphoryl-undecaprenol N-acetylglucosamine transferase (370 aa).

UDP-N-acetyl-alpha-D-glucosamine-binding positions include 15–17, Asn-126, Arg-169, Ser-197, and Gln-299; that span reads TGG.

The protein belongs to the glycosyltransferase 28 family. MurG subfamily.

It localises to the cell inner membrane. It catalyses the reaction di-trans,octa-cis-undecaprenyl diphospho-N-acetyl-alpha-D-muramoyl-L-alanyl-D-glutamyl-meso-2,6-diaminopimeloyl-D-alanyl-D-alanine + UDP-N-acetyl-alpha-D-glucosamine = di-trans,octa-cis-undecaprenyl diphospho-[N-acetyl-alpha-D-glucosaminyl-(1-&gt;4)]-N-acetyl-alpha-D-muramoyl-L-alanyl-D-glutamyl-meso-2,6-diaminopimeloyl-D-alanyl-D-alanine + UDP + H(+). It participates in cell wall biogenesis; peptidoglycan biosynthesis. Its function is as follows. Cell wall formation. Catalyzes the transfer of a GlcNAc subunit on undecaprenyl-pyrophosphoryl-MurNAc-pentapeptide (lipid intermediate I) to form undecaprenyl-pyrophosphoryl-MurNAc-(pentapeptide)GlcNAc (lipid intermediate II). The sequence is that of UDP-N-acetylglucosamine--N-acetylmuramyl-(pentapeptide) pyrophosphoryl-undecaprenol N-acetylglucosamine transferase from Methylorubrum populi (strain ATCC BAA-705 / NCIMB 13946 / BJ001) (Methylobacterium populi).